The chain runs to 865 residues: Alanine--tRNA ligase (865 aa).

Positions 552, 556, 654, and 658 each coordinate Zn(2+).

Belongs to the class-II aminoacyl-tRNA synthetase family. Zn(2+) is required as a cofactor.

The protein resides in the cytoplasm. It catalyses the reaction tRNA(Ala) + L-alanine + ATP = L-alanyl-tRNA(Ala) + AMP + diphosphate. Functionally, catalyzes the attachment of alanine to tRNA(Ala) in a two-step reaction: alanine is first activated by ATP to form Ala-AMP and then transferred to the acceptor end of tRNA(Ala). Also edits incorrectly charged Ser-tRNA(Ala) and Gly-tRNA(Ala) via its editing domain. The chain is Alanine--tRNA ligase from Coxiella burnetii (strain Dugway 5J108-111).